The following is a 351-amino-acid chain: RCC1 repeat-containing protein C10F6.04 (351 aa).

RCC1 repeat units lie at residues 1–48 (MLLS…LLDE), 50–106 (SQLW…IVHA), 108–162 (RRRV…CVTN), and 163–212 (EGNL…VLQE).

It is found in the cytoplasm. The protein resides in the nucleus. The polypeptide is RCC1 repeat-containing protein C10F6.04 (Schizosaccharomyces pombe (strain 972 / ATCC 24843) (Fission yeast)).